The primary structure comprises 967 residues: Regulator of G-protein signaling 3 (967 aa).

Residues 18–95 (QITIRRGKDG…EIILLVWRVV (78 aa)) form the PDZ domain. The interval 115 to 135 (THDLLSPPNKREKNCTHGAPT) is disordered. Arginine 167 carries the omega-N-methylarginine modification. The interval 389 to 705 (QLAATPTERK…EGGLSLRVQN (317 aa)) is disordered. Composition is skewed to polar residues over residues 476-486 (LPSSKNPSPSQ), 512-549 (SPSS…TEVP), and 577-597 (SSAS…QGSL). The span at 650 to 676 (GEDEDAEEGEEGEEGEEDEEDDTNDDN) shows a compositional bias: acidic residues. Positions 677 to 687 (YGDRNEAKRSS) are enriched in basic and acidic residues. A phosphoserine mark is found at serine 713, serine 716, serine 748, and serine 777. Positions 807-830 (FRRRNESPGAQPAGKADKTTKSFK) are disordered. Positions 821 to 830 (KADKTTKSFK) are enriched in basic and acidic residues. The region spanning 842–967 (SLEKLLLHKY…INQKKMSPPL (126 aa)) is the RGS domain.

In terms of assembly, binds EFNB1 and EFNB2. Binds the GNB1-GNG2 heterodimer. Binds ESR1. Post-translationally, phosphorylated by cyclic GMP-dependent protein kinase. In terms of processing, ISGylated. As to expression, detected in kidney, uterus, ovary, heart, brain, spleen, lung and testis.

The protein localises to the cytoplasm. It localises to the membrane. Its subcellular location is the nucleus. In terms of biological role, down-regulates signaling from heterotrimeric G-proteins by increasing the GTPase activity of the alpha subunits, thereby driving them into their inactive GDP-bound form. Down-regulates G-protein-mediated release of inositol phosphates and activation of MAP kinases. The sequence is that of Regulator of G-protein signaling 3 (Rgs3) from Rattus norvegicus (Rat).